The following is a 172-amino-acid chain: Protein-export protein SecB (172 aa).

This sequence belongs to the SecB family. As to quaternary structure, homotetramer, a dimer of dimers. One homotetramer interacts with 1 SecA dimer.

It is found in the cytoplasm. Functionally, one of the proteins required for the normal export of preproteins out of the cell cytoplasm. It is a molecular chaperone that binds to a subset of precursor proteins, maintaining them in a translocation-competent state. It also specifically binds to its receptor SecA. The polypeptide is Protein-export protein SecB (Dinoroseobacter shibae (strain DSM 16493 / NCIMB 14021 / DFL 12)).